A 211-amino-acid polypeptide reads, in one-letter code: Uridine kinase (211 aa).

12–19 (GGSGSGKT) contacts ATP.

It belongs to the uridine kinase family.

It localises to the cytoplasm. The catalysed reaction is uridine + ATP = UMP + ADP + H(+). It carries out the reaction cytidine + ATP = CMP + ADP + H(+). Its pathway is pyrimidine metabolism; CTP biosynthesis via salvage pathway; CTP from cytidine: step 1/3. It participates in pyrimidine metabolism; UMP biosynthesis via salvage pathway; UMP from uridine: step 1/1. The polypeptide is Uridine kinase (Bacillus velezensis (strain DSM 23117 / BGSC 10A6 / LMG 26770 / FZB42) (Bacillus amyloliquefaciens subsp. plantarum)).